The primary structure comprises 430 residues: Adenylosuccinate synthetase (430 aa).

Residues 12 to 18 (GDEGKGK) and 40 to 42 (GHT) each bind GTP. Asp13 acts as the Proton acceptor in catalysis. The Mg(2+) site is built by Asp13 and Gly40. IMP-binding positions include 13–16 (DEGK), 38–41 (NAGH), Thr130, Arg144, Gln224, Thr239, and Arg303. Catalysis depends on His41, which acts as the Proton donor. Position 299–305 (299–305 (VVTGRPR)) interacts with substrate. Residues Arg305, 331–333 (KLD), and 413–415 (STS) each bind GTP.

This sequence belongs to the adenylosuccinate synthetase family. Homodimer. Mg(2+) is required as a cofactor.

Its subcellular location is the cytoplasm. The enzyme catalyses IMP + L-aspartate + GTP = N(6)-(1,2-dicarboxyethyl)-AMP + GDP + phosphate + 2 H(+). It functions in the pathway purine metabolism; AMP biosynthesis via de novo pathway; AMP from IMP: step 1/2. Its function is as follows. Plays an important role in the de novo pathway of purine nucleotide biosynthesis. Catalyzes the first committed step in the biosynthesis of AMP from IMP. The protein is Adenylosuccinate synthetase of Azorhizobium caulinodans (strain ATCC 43989 / DSM 5975 / JCM 20966 / LMG 6465 / NBRC 14845 / NCIMB 13405 / ORS 571).